A 219-amino-acid polypeptide reads, in one-letter code: MRILLIEDDMLIGDGIKTGLSKMGFSVDWFTQGRQGKEALYSAPYDAVILDLTLPGMDGRDILREWREKGQREPVLILTARDALEERVEGLRLGADDYLCKPFALIEVAARLEALMRRTNGQASNELRHGNVMLDPGKRIATLAGEPLTLKPKEFALLELLMRNAGRVLPRKLIEEKLYTWDEEVTSNAVEVHVHHLRRKLGSDFIRTVHGIGYTLGEK.

The Response regulatory domain maps to 2–116 (RILLIEDDML…EVAARLEALM (115 aa)). Asp-51 carries the post-translational modification 4-aspartylphosphate. The segment at residues 124–218 (SNELRHGNVM…VHGIGYTLGE (95 aa)) is a DNA-binding region (ompR/PhoB-type).

Phosphorylated by QseC.

It is found in the cytoplasm. Member of a two-component regulatory system QseB/QseC. Activates the flagella regulon by activating transcription of FlhDC. Currently it is not known whether this effect is direct or not. The polypeptide is Transcriptional regulatory protein QseB (qseB) (Escherichia coli O157:H7).